Consider the following 211-residue polypeptide: Holliday junction branch migration complex subunit RuvA (211 aa).

A domain I region spans residues 1–64 (MIGRLRGMLV…EDAQLLYGFA (64 aa)). The segment at 65 to 143 (NKVERKLFRL…DWQAQQIHLV (79 aa)) is domain II. A flexible linker region spans residues 144–162 (SDDGVIPEQLSAELSQETT). A domain III region spans residues 163–211 (FVNDNKGDAINALLSLGYKQVQADKAVKSVYNRGMSSENIIRDALKSMI).

The protein belongs to the RuvA family. As to quaternary structure, homotetramer. Forms an RuvA(8)-RuvB(12)-Holliday junction (HJ) complex. HJ DNA is sandwiched between 2 RuvA tetramers; dsDNA enters through RuvA and exits via RuvB. An RuvB hexamer assembles on each DNA strand where it exits the tetramer. Each RuvB hexamer is contacted by two RuvA subunits (via domain III) on 2 adjacent RuvB subunits; this complex drives branch migration. In the full resolvosome a probable DNA-RuvA(4)-RuvB(12)-RuvC(2) complex forms which resolves the HJ.

The protein localises to the cytoplasm. The RuvA-RuvB-RuvC complex processes Holliday junction (HJ) DNA during genetic recombination and DNA repair, while the RuvA-RuvB complex plays an important role in the rescue of blocked DNA replication forks via replication fork reversal (RFR). RuvA specifically binds to HJ cruciform DNA, conferring on it an open structure. The RuvB hexamer acts as an ATP-dependent pump, pulling dsDNA into and through the RuvAB complex. HJ branch migration allows RuvC to scan DNA until it finds its consensus sequence, where it cleaves and resolves the cruciform DNA. The chain is Holliday junction branch migration complex subunit RuvA from Colwellia psychrerythraea (strain 34H / ATCC BAA-681) (Vibrio psychroerythus).